The following is a 432-amino-acid chain: uncharacterized protein (432 aa).

A Cytochrome c domain is found at 223–432 (ASAVRGEALF…KDLIEYLKTR (210 aa)). Residues cysteine 236, cysteine 239, and histidine 240 each contribute to the heme c site.

This is an uncharacterized protein from Sinorhizobium fredii (strain NBRC 101917 / NGR234).